The chain runs to 97 residues: Large ribosomal subunit protein eL21 (97 aa).

It belongs to the eukaryotic ribosomal protein eL21 family.

The chain is Large ribosomal subunit protein eL21 from Methanospirillum hungatei JF-1 (strain ATCC 27890 / DSM 864 / NBRC 100397 / JF-1).